The sequence spans 407 residues: MKAREVEFEGHLIDSMIFTKALDIILDLDGEFEILEFRVGKKKDDPSYARMIVFGRDDAHLEQILKELHKIGARIPDIEEVELAEAPADKVLPDGFYVTTNHPTFVRYGGEWLPVEDISMDRVIVIRDGRAYCIPIDEVVRGDRVVVGEKGVRVVPPERPRKSTVFEFMGGRVSSERPTERMIEAIAREIYELKLKGGKIAVVAGPAVDHTSARNALAALIRDGYVDLLLSGNALAVHDIEISIFGTSLGMDICKGRPVPGGNRHHLYTISKVIAAGGIKKAIEKGIIKDGIMYECVKNNVPFILAGSIRDDGPLPEVITDVMVAKKKMKEALRGINMVIMLATMLHSIAVGNLLPSYVKTICVDMNPSTVTKLMDRGTHQAIGVVTDVGLFLPLLYLKIKEIEAKE.

Residues N233, A234, D312, T344, M345, L346, H347, D365, D388, and V389 each coordinate NAD(+).

Belongs to the AgrE/ArgZ ornithine cyclodeaminase family. Requires NAD(+) as cofactor.

The enzyme catalyses L-ornithine = L-proline + NH4(+). In terms of biological role, catalyzes the conversion of ornithine to proline, with the release of ammonia. This is Ornithine cyclodeaminase from Archaeoglobus fulgidus (strain ATCC 49558 / DSM 4304 / JCM 9628 / NBRC 100126 / VC-16).